The primary structure comprises 388 residues: uncharacterized protein (388 aa).

A run of 8 helical transmembrane segments spans residues 15-37 (VISAFLSISLFEGFVILTLLLVL), 97-119 (GFSKIFPKLLLGISLILLPVVFY), 129-151 (PIWGGTFEVGFFYALFSITTFLL), 158-175 (FIYIPLFLLFLAVIFLSA), 179-196 (MMLAFFVIFYLILFVLFK), 203-225 (LAFWSVNFLIILSFIGGYVYLSQ), 304-326 (IFIVSEFIERGILGLLGILYIYF), and 347-369 (LLSVPLGLHLIQSVFTFFWDALL).

It localises to the cell membrane. This is an uncharacterized protein from Aquifex aeolicus (strain VF5).